A 320-amino-acid polypeptide reads, in one-letter code: uncharacterized protein (320 aa).

At arginine 61 the chain carries Omega-N-methylarginine. A disordered region spans residues 299-320; it reads LHLQHQKQTSKDAGRQTPERKA. Residues 307–320 show a composition bias toward basic and acidic residues; it reads TSKDAGRQTPERKA. Position 315 is a phosphothreonine (threonine 315).

This is an uncharacterized protein from Mus musculus (Mouse).